The sequence spans 235 residues: 1-(5-phosphoribosyl)-5-[(5-phosphoribosylamino)methylideneamino] imidazole-4-carboxamide isomerase (235 aa).

Residue D8 is the Proton acceptor of the active site. D128 serves as the catalytic Proton donor.

This sequence belongs to the HisA/HisF family.

The protein localises to the cytoplasm. It catalyses the reaction 1-(5-phospho-beta-D-ribosyl)-5-[(5-phospho-beta-D-ribosylamino)methylideneamino]imidazole-4-carboxamide = 5-[(5-phospho-1-deoxy-D-ribulos-1-ylimino)methylamino]-1-(5-phospho-beta-D-ribosyl)imidazole-4-carboxamide. It functions in the pathway amino-acid biosynthesis; L-histidine biosynthesis; L-histidine from 5-phospho-alpha-D-ribose 1-diphosphate: step 4/9. The polypeptide is 1-(5-phosphoribosyl)-5-[(5-phosphoribosylamino)methylideneamino] imidazole-4-carboxamide isomerase (Thermus thermophilus (strain ATCC 27634 / DSM 579 / HB8)).